The sequence spans 126 residues: Histone H2B type 1-L (126 aa).

Positions Met1–Lys12 are enriched in low complexity. Positions Met1 to Glu36 are disordered. An N-acetylproline modification is found at Pro2. Glu3 is modified (ADP-ribosyl glutamic acid). Lys6 bears the N6-(2-hydroxyisobutyryl)lysine; alternate mark. Lys6 is modified (N6-(beta-hydroxybutyryl)lysine; alternate). At Lys6 the chain carries N6-acetyllysine; alternate. N6-butyryllysine; alternate is present on Lys6. Lys6 bears the N6-crotonyllysine; alternate mark. Lys6 is subject to N6-lactoyllysine; alternate. A Glycyl lysine isopeptide (Lys-Gly) (interchain with G-Cter in SUMO2); alternate cross-link involves residue Lys6. Ser7 carries the ADP-ribosylserine modification. The residue at position 12 (Lys12) is an N6-(beta-hydroxybutyryl)lysine; alternate. Lys12 and Lys13 each carry N6-acetyllysine; alternate. Lys12 and Lys13 each carry N6-crotonyllysine; alternate. An N6-lactoyllysine; alternate modification is found at Lys12. Lys13 carries the post-translational modification N6-(2-hydroxyisobutyryl)lysine; alternate. At Ser15 the chain carries Phosphoserine; by STK4/MST1. N6-acetyllysine; alternate is present on residues Lys16, Lys17, Lys21, and Lys24. N6-crotonyllysine; alternate occurs at positions 16, 17, 21, and 24. Residues Lys16, Lys17, Lys21, and Lys24 each carry the N6-lactoyllysine; alternate modification. N6-(beta-hydroxybutyryl)lysine; alternate is present on residues Lys17 and Lys21. Lys17 carries the N6-glutaryllysine; alternate modification. N6-(2-hydroxyisobutyryl)lysine; alternate is present on residues Lys21 and Lys24. Lys21 is subject to N6-butyryllysine; alternate. Residue Lys21 forms a Glycyl lysine isopeptide (Lys-Gly) (interchain with G-Cter in SUMO2); alternate linkage. N6-(2-hydroxyisobutyryl)lysine is present on Lys25. Lys35 carries the N6-(2-hydroxyisobutyryl)lysine; alternate modification. N6-(beta-hydroxybutyryl)lysine; alternate is present on Lys35. At Lys35 the chain carries N6-crotonyllysine; alternate. Lys35 carries the post-translational modification N6-glutaryllysine; alternate. Lys35 is subject to N6-succinyllysine; alternate. Residue Lys35 forms a Glycyl lysine isopeptide (Lys-Gly) (interchain with G-Cter in ubiquitin); alternate linkage. Position 36 is a polyADP-ribosyl glutamic acid (Glu36). Ser37 is subject to Phosphoserine; by AMPK. 3 positions are modified to N6-(2-hydroxyisobutyryl)lysine; alternate: Lys44, Lys47, and Lys58. Lys44 carries the N6-lactoyllysine; alternate modification. N6-glutaryllysine; alternate occurs at positions 44 and 47. N6-methyllysine; alternate is present on Lys47. N6,N6-dimethyllysine; alternate is present on Lys58. Arg80 carries the post-translational modification Dimethylated arginine. Position 86 is an N6-(2-hydroxyisobutyryl)lysine; alternate (Lys86). Lys86 carries the N6-(beta-hydroxybutyryl)lysine; alternate modification. Lys86 carries the post-translational modification N6-acetyllysine; alternate. N6-lactoyllysine; alternate is present on Lys86. Lys86 carries the N6,N6,N6-trimethyllysine; alternate modification. Residues Arg87 and Arg93 each carry the omega-N-methylarginine modification. Position 109 is an N6-(2-hydroxyisobutyryl)lysine; alternate (Lys109). Residue Lys109 is modified to N6-lactoyllysine; alternate. Residue Lys109 is modified to N6-glutaryllysine; alternate. Lys109 is modified (N6-methyllysine; alternate). The O-linked (GlcNAc) serine glycan is linked to Ser113. Phosphothreonine is present on Thr116. 2 positions are modified to N6-(2-hydroxyisobutyryl)lysine; alternate: Lys117 and Lys121. Lys117 and Lys121 each carry N6-(beta-hydroxybutyryl)lysine; alternate. N6-lactoyllysine; alternate occurs at positions 117 and 121. Residues Lys117 and Lys121 each carry the N6-glutaryllysine; alternate modification. An N6-succinyllysine; alternate mark is found at Lys117 and Lys121. Position 117 is an N6-malonyllysine; alternate (Lys117). Position 117 is an N6-methylated lysine; alternate (Lys117). Lys121 participates in a covalent cross-link: Glycyl lysine isopeptide (Lys-Gly) (interchain with G-Cter in ubiquitin); alternate.

The protein belongs to the histone H2B family. The nucleosome is a histone octamer containing two molecules each of H2A, H2B, H3 and H4 assembled in one H3-H4 heterotetramer and two H2A-H2B heterodimers. The octamer wraps approximately 147 bp of DNA. In terms of processing, monoubiquitination at Lys-35 (H2BK34Ub) by the MSL1/MSL2 dimer is required for histone H3 'Lys-4' (H3K4me) and 'Lys-79' (H3K79me) methylation and transcription activation at specific gene loci, such as HOXA9 and MEIS1 loci. Similarly, monoubiquitination at Lys-121 (H2BK120Ub) by the RNF20/40 complex gives a specific tag for epigenetic transcriptional activation and is also prerequisite for histone H3 'Lys-4' and 'Lys-79' methylation. It also functions cooperatively with the FACT dimer to stimulate elongation by RNA polymerase II. H2BK120Ub also acts as a regulator of mRNA splicing: deubiquitination by USP49 is required for efficient cotranscriptional splicing of a large set of exons. Post-translationally, phosphorylation at Ser-37 (H2BS36ph) by AMPK in response to stress promotes transcription. Phosphorylated on Ser-15 (H2BS14ph) by STK4/MST1 during apoptosis; which facilitates apoptotic chromatin condensation. Also phosphorylated on Ser-15 in response to DNA double strand breaks (DSBs), and in correlation with somatic hypermutation and immunoglobulin class-switch recombination. GlcNAcylation at Ser-113 promotes monoubiquitination of Lys-121. It fluctuates in response to extracellular glucose, and associates with transcribed genes. In terms of processing, ADP-ribosylated by PARP1 or PARP2 on Ser-7 (H2BS6ADPr) in response to DNA damage. H2BS6ADPr promotes recruitment of CHD1L. Mono-ADP-ribosylated on Glu-3 (H2BE2ADPr) by PARP3 in response to single-strand breaks. Poly ADP-ribosylation on Glu-36 (H2BE35ADPr) by PARP1 regulates adipogenesis: it inhibits phosphorylation at Ser-37 (H2BS36ph), thereby blocking expression of pro-adipogenetic genes. Post-translationally, crotonylation (Kcr) is specifically present in male germ cells and marks testis-specific genes in post-meiotic cells, including X-linked genes that escape sex chromosome inactivation in haploid cells. Crotonylation marks active promoters and enhancers and confers resistance to transcriptional repressors. It is also associated with post-meiotically activated genes on autosomes. Lactylated in macrophages by EP300/P300 by using lactoyl-CoA directly derived from endogenous or exogenous lactate, leading to stimulates gene transcription.

It is found in the nucleus. The protein resides in the chromosome. Functionally, core component of nucleosome. Nucleosomes wrap and compact DNA into chromatin, limiting DNA accessibility to the cellular machineries which require DNA as a template. Histones thereby play a central role in transcription regulation, DNA repair, DNA replication and chromosomal stability. DNA accessibility is regulated via a complex set of post-translational modifications of histones, also called histone code, and nucleosome remodeling. The chain is Histone H2B type 1-L from Homo sapiens (Human).